The chain runs to 129 residues: Small ribosomal subunit protein uS11c (129 aa).

The protein belongs to the universal ribosomal protein uS11 family. In terms of assembly, part of the 30S ribosomal subunit.

It is found in the plastid. The protein resides in the chloroplast. The protein is Small ribosomal subunit protein uS11c of Pleurastrum terricola (Filamentous green alga).